The chain runs to 614 residues: Protein YehQ (614 aa).

2 consecutive SWIM-type zinc fingers follow at residues Val-55 to Gln-89 and Ser-151 to Val-185.

This chain is Protein YehQ (yehQ), found in Escherichia coli (strain K12).